The chain runs to 57 residues: Large ribosomal subunit protein bL32c (57 aa).

As to quaternary structure, component of the chloroplast large ribosomal subunit (LSU). Mature 70S chloroplast ribosomes of higher plants consist of a small (30S) and a large (50S) subunit. The 30S small subunit contains 1 molecule of ribosomal RNA (16S rRNA) and 24 different proteins. The 50S large subunit contains 3 rRNA molecules (23S, 5S and 4.5S rRNA) and 33 different proteins.

Its subcellular location is the plastid. It localises to the chloroplast. In terms of biological role, component of the chloroplast ribosome (chloro-ribosome), a dedicated translation machinery responsible for the synthesis of chloroplast genome-encoded proteins, including proteins of the transcription and translation machinery and components of the photosynthetic apparatus. This Spinacia oleracea (Spinach) protein is Large ribosomal subunit protein bL32c (rpl32).